We begin with the raw amino-acid sequence, 158 residues long: Small ribosomal subunit protein bS6 (158 aa).

Basic and acidic residues predominate over residues 92-149 (RVDEHEEGPSAMMRKADRDRERDDRGPREGGFRGDREGRGDRDGFRGDRGPRRPREDA). Residues 92–158 (RVDEHEEGPS…ADAPAAAVEE (67 aa)) are disordered.

Belongs to the bacterial ribosomal protein bS6 family.

Binds together with bS18 to 16S ribosomal RNA. The polypeptide is Small ribosomal subunit protein bS6 (Rhodopseudomonas palustris (strain ATCC BAA-98 / CGA009)).